A 159-amino-acid chain; its full sequence is MSRRHAAEKRVILPDMKYNSILLSRFINNIMKEGKKALAEKIVYSAFNKIEKKHRVDPYQTFNNAMHNVKPHLEVTSVRVGGANYQVPTHVDERRGYTLASRWIINAASKRSEKMMIDKLAEELFEASNNRGVAIKKKEDTHKMAEANKAFSHFSPKKM.

Belongs to the universal ribosomal protein uS7 family. Part of the 30S ribosomal subunit. Contacts proteins S9 and S11.

Its function is as follows. One of the primary rRNA binding proteins, it binds directly to 16S rRNA where it nucleates assembly of the head domain of the 30S subunit. Is located at the subunit interface close to the decoding center, probably blocks exit of the E-site tRNA. This Rickettsia felis (strain ATCC VR-1525 / URRWXCal2) (Rickettsia azadi) protein is Small ribosomal subunit protein uS7.